The chain runs to 319 residues: Thioredoxin reductase (319 aa).

FAD-binding positions include 11 to 14 (SGPA), 40 to 41 (IA), glutamine 45, asparagine 54, valine 87, cysteine 145, aspartate 288, and 295 to 297 (RQA). Cysteine 142 and cysteine 145 are oxidised to a cystine.

The protein belongs to the class-II pyridine nucleotide-disulfide oxidoreductase family. Homodimer. Requires FAD as cofactor.

It localises to the cytoplasm. The enzyme catalyses [thioredoxin]-dithiol + NADP(+) = [thioredoxin]-disulfide + NADPH + H(+). The sequence is that of Thioredoxin reductase (TRR1) from Yarrowia lipolytica (strain CLIB 122 / E 150) (Yeast).